We begin with the raw amino-acid sequence, 622 residues long: Modification methylase LlaI (622 aa).

This sequence belongs to the N(4)/N(6)-methyltransferase family.

It catalyses the reaction a 2'-deoxyadenosine in DNA + S-adenosyl-L-methionine = an N(6)-methyl-2'-deoxyadenosine in DNA + S-adenosyl-L-homocysteine + H(+). In terms of biological role, an alpha subtype methylase that modifies unknown specific adenine residues, and protects the DNA from cleavage by the LlaI endonuclease. The sequence is that of Modification methylase LlaI from Lactococcus lactis subsp. lactis (Streptococcus lactis).